Reading from the N-terminus, the 162-residue chain is Nucleotide-binding protein Franean1_6074 (162 aa).

The protein belongs to the YajQ family.

In terms of biological role, nucleotide-binding protein. This is Nucleotide-binding protein Franean1_6074 from Parafrankia sp. (strain EAN1pec).